The primary structure comprises 773 residues: Probable C-mannosyltransferase DPY19L2 (773 aa).

A disordered region spans residues 1–45 (MVGPTRSKLREGSSDRPQSSCTGQARRRWSAATMEPQQERSAPQE). At 1-122 (MVGPTRSKLR…ALQMHRFSHR (122 aa)) the chain is on the nuclear side. Residues 123–143 (TLFGLAIFVGILHWLHLITLF) form a helical membrane-spanning segment. Residues 144–209 (ENDHHFSHLS…INTVKRFHLY (66 aa)) are Perinuclear space-facing. Residues 210–230 (PEVVIAYWYRTIIGIMNLFGI) form a helical membrane-spanning segment. Topologically, residues 231–256 (ETKTCWNVTRMEPLNEVQSCEGLGDP) are nuclear. Residues 257-277 (ACFYIGVIFILNGLMMGLFFI) traverse the membrane as a helical segment. Over 278 to 311 (YSTYLSGSQLGGLITVACYFFNHGEATRVMWTPP) the chain is Perinuclear space. A helical transmembrane segment spans residues 312–332 (LRESFSYPFLVLQMYILTIIL). Topologically, residues 333–358 (RTSTVHKKHYMALCFSNVAFMLPWQF) are nuclear. Residues 359–379 (AQFILFTQIASLFPMYVVGYI) form a helical membrane-spanning segment. Topologically, residues 380–386 (EPSKFQK) are perinuclear space. The chain crosses the membrane as a helical span at residues 387–407 (IIYVNMSSVALCFILMFGNSM). At 408–437 (YLSSYYSSCLLVTWAIMQKKSKIQKLGGTE) the chain is on the nuclear side. A helical membrane pass occupies residues 438 to 458 (LQFWLIQGCFWWCGTIILKFL). At 459-507 (TSKICGVSDHIRLSDLIAARILRYTDFDTLIYTCAPEFDFMEQATPLRY) the chain is on the perinuclear space side. Residues 508–528 (IKTLLLPLILVITYLIFKKIV) traverse the membrane as a helical segment. Residues 529 to 548 (RDIMCVLYTNTYVRKQLLDN) lie on the Nuclear side of the membrane. A helical transmembrane segment spans residues 549 to 569 (AELIFHTLQLLAFTGLAILIM). The Perinuclear space portion of the chain corresponds to 570-590 (RLKLFLTPHMCIMASLICSQR). Residues 591 to 611 (LFGWLFCRIHFENVVFGILTM) form a helical membrane-spanning segment. The Nuclear segment spans residues 612–773 (MSIQGCANLH…NSMYRVLKIN (162 aa)).

It belongs to the dpy-19 family. As to quaternary structure, interacts with FAM209. In terms of tissue distribution, predominantly expressed in testis. Present in testis but absent from epididymal sperm (at protein level).

The protein localises to the nucleus inner membrane. Functionally, probable C-mannosyltransferase that mediates C-mannosylation of tryptophan residues on target proteins. Required during spermatogenesis for sperm head elongation and acrosome formation. Also plays a role in acrosome attachment to the nuclear envelope. The sequence is that of Probable C-mannosyltransferase DPY19L2 (Dpy19l2) from Mus musculus (Mouse).